Here is a 398-residue protein sequence, read N- to C-terminus: Probable aminomethyltransferase (398 aa).

Belongs to the GcvT family. In terms of assembly, the glycine cleavage system is composed of four proteins: P, T, L and H.

The enzyme catalyses N(6)-[(R)-S(8)-aminomethyldihydrolipoyl]-L-lysyl-[protein] + (6S)-5,6,7,8-tetrahydrofolate = N(6)-[(R)-dihydrolipoyl]-L-lysyl-[protein] + (6R)-5,10-methylene-5,6,7,8-tetrahydrofolate + NH4(+). In terms of biological role, the glycine cleavage system catalyzes the degradation of glycine. This Pyrococcus furiosus (strain ATCC 43587 / DSM 3638 / JCM 8422 / Vc1) protein is Probable aminomethyltransferase.